A 268-amino-acid polypeptide reads, in one-letter code: Centromere protein Q (268 aa).

Residues 1–80 (MSGKANASKK…KTWQPLSKST (80 aa)) form a disordered region. Phosphoserine occurs at positions 31 and 50. Residues 58–72 (TNLKHGKTAASKRKT) are compositionally biased toward basic residues. The stretch at 170-206 (ELMTGNIQSLKNKIQILASEVEEEEERVKQMHQINSS) forms a coiled coil. A Phosphoserine modification is found at Ser249.

This sequence belongs to the CENP-Q/OKP1 family. Component of the CENPA-CAD complex, composed of CENPI, CENPK, CENPL, CENPO, CENPP, CENPQ, CENPR and CENPS. The CENPA-CAD complex interacts with the CENPA-NAC complex, at least composed of CENPA, CENPC, CENPH, CENPM, CENPN, CENPT and CENPU. In terms of processing, phosphorylation at Ser-50 is essential for CENPE recruitment to kinetochores and orderly chromosome congression.

The protein resides in the nucleus. It is found in the chromosome. It localises to the centromere. Component of the CENPA-CAD (nucleosome distal) complex, a complex recruited to centromeres which is involved in assembly of kinetochore proteins, mitotic progression and chromosome segregation. May be involved in incorporation of newly synthesized CENPA into centromeres via its interaction with the CENPA-NAC complex. Plays an important role in chromosome congression and in the recruitment of CENP-O complex (which comprises CENPO, CENPP, CENPQ and CENPU), CENPE and PLK1 to the kinetochores. This is Centromere protein Q (CENPQ) from Homo sapiens (Human).